Reading from the N-terminus, the 181-residue chain is Malignant T-cell-amplified sequence 2 (181 aa).

The PUA domain occupies 92–171; sequence LPHQQVDKGA…IGIENIHYLN (80 aa).

This sequence belongs to the MCTS1 family.

The protein resides in the cytoplasm. The sequence is that of Malignant T-cell-amplified sequence 2 from Homo sapiens (Human).